The chain runs to 1169 residues: DNA repair protein RAD5 (1169 aa).

The residue at position 2 (Ser-2) is an N-acetylserine. 4 positions are modified to phosphoserine: Ser-20, Ser-23, Ser-129, and Ser-130. A compositionally biased stretch (basic and acidic residues) spans 302–317 (MKRRRTEGGNKREKDN). The disordered stretch occupies residues 302 to 327 (MKRRRTEGGNKREKDNGNFGRTLTET). The region spanning 519 to 730 (PILKTMIKGG…YSLVKFLELD (212 aa)) is the Helicase ATP-binding domain. 532–539 (DEMGLGKT) is an ATP binding site. Residues 681-684 (DEGH) carry the DEGH box motif. An RING-type zinc finger spans residues 914-961 (CSICTTEPMDLDKALFTECGHSFCEKCLFEYIEFQNSKNLGLKCPNCR). Residues 995–1165 (KITALLKELQ…RRKRRIEEIQ (171 aa)) enclose the Helicase C-terminal domain.

Belongs to the SNF2/RAD54 helicase family. In terms of assembly, homodimer. Interacts with POL30, RAD18, UBC9 and UBC13. Mg(2+) is required as a cofactor. Mn(2+) serves as cofactor. The cofactor is Ca(2+).

The protein localises to the cytoplasm. It is found in the nucleus. Its function is as follows. Probable helicase, member of the UBC2/RAD6 epistasis group. Functions with the DNA repair protein RAD18 in error-free postreplication DNA repair. Involved in the maintenance of wild-type rates of instability of simple repetitive sequences such as poly(GT) repeats. Seems to be involved in maintaining a balance which acts in favor of error-prone non-homologous joining during DNA double-strand breaks repairs. Recruits the UBC13-MMS2 dimer to chromatin for DNA repair. The polypeptide is DNA repair protein RAD5 (RAD5) (Saccharomyces cerevisiae (strain ATCC 204508 / S288c) (Baker's yeast)).